Consider the following 322-residue polypeptide: Ubiquinone biosynthesis O-methyltransferase, mitochondrial (322 aa).

Residues 1–37 constitute a mitochondrion transit peptide; the sequence is MLASVRVNQLQRLLLSARRLSSSPIIPPSRLLHQRLF. Residues 46 to 75 are disordered; that stretch reads AASFSSSHPKIQTLEGKASNKSRSTSSTTS. Arg108, Gly139, Asp160, and Leu205 together coordinate S-adenosyl-L-methionine. Residues Glu206, Glu209, and His210 each coordinate Mg(2+).

This sequence belongs to the class I-like SAM-binding methyltransferase superfamily. UbiG/COQ3 family. In terms of assembly, component of a multi-subunit COQ enzyme complex. It depends on Mg(2+) as a cofactor.

Its subcellular location is the mitochondrion inner membrane. The enzyme catalyses a 3,4-dihydroxy-5-(all-trans-polyprenyl)benzoate + S-adenosyl-L-methionine = a 4-hydroxy-3-methoxy-5-(all-trans-polyprenyl)benzoate + S-adenosyl-L-homocysteine + H(+). It carries out the reaction a 3-demethylubiquinone + S-adenosyl-L-methionine = a ubiquinone + S-adenosyl-L-homocysteine. The catalysed reaction is a 3-demethylubiquinol + S-adenosyl-L-methionine = a ubiquinol + S-adenosyl-L-homocysteine + H(+). It functions in the pathway cofactor biosynthesis; ubiquinone biosynthesis. Functionally, O-methyltransferase required for two non-consecutive steps during ubiquinone biosynthesis. Catalyzes the 2 O-methylation of 3,4-dihydroxy-5-(all-trans-polyprenyl)benzoic acid into 4-hydroxy-3-methoxy-5-(all-trans-polyprenyl)benzoic acid. Also catalyzes the last step of ubiquinone biosynthesis by mediating methylation of 3-demethylubiquinone into ubiquinone. Also able to mediate the methylation of 3-demethylubiquinol into ubiquinol. The chain is Ubiquinone biosynthesis O-methyltransferase, mitochondrial from Arabidopsis thaliana (Mouse-ear cress).